The chain runs to 100 residues: MELTPREKDKLLIFTAALLAERRKARGVKLNYPESIAYITATIMEGARDGKTVAELMGEGRTLLKRQDVMEGVPEMIHEVQVEATFPDGTKLVTVHDPIV.

The protein belongs to the urease gamma subunit family. As to quaternary structure, heterotrimer of UreA (gamma), UreB (beta) and UreC (alpha) subunits. Three heterotrimers associate to form the active enzyme.

It localises to the cytoplasm. The enzyme catalyses urea + 2 H2O + H(+) = hydrogencarbonate + 2 NH4(+). It participates in nitrogen metabolism; urea degradation; CO(2) and NH(3) from urea (urease route): step 1/1. The polypeptide is Urease subunit gamma (Alcanivorax borkumensis (strain ATCC 700651 / DSM 11573 / NCIMB 13689 / SK2)).